Here is a 248-residue protein sequence, read N- to C-terminus: NH(3)-dependent NAD(+) synthetase (248 aa).

31–38 is a binding site for ATP; that stretch reads GVSGGVDS. Residue D37 participates in Mg(2+) binding. Position 114 (R114) interacts with deamido-NAD(+). T134 contributes to the ATP binding site. E139 lines the Mg(2+) pocket. Positions 147 and 154 each coordinate deamido-NAD(+). The ATP site is built by K163 and S185. 236-237 contributes to the deamido-NAD(+) binding site; that stretch reads HK.

The protein belongs to the NAD synthetase family. Homodimer.

The enzyme catalyses deamido-NAD(+) + NH4(+) + ATP = AMP + diphosphate + NAD(+) + H(+). It functions in the pathway cofactor biosynthesis; NAD(+) biosynthesis; NAD(+) from deamido-NAD(+) (ammonia route): step 1/1. Catalyzes the ATP-dependent amidation of deamido-NAD to form NAD. Uses ammonia as a nitrogen source. The polypeptide is NH(3)-dependent NAD(+) synthetase (Methanoregula boonei (strain DSM 21154 / JCM 14090 / 6A8)).